Here is a 209-residue protein sequence, read N- to C-terminus: UPF0319 protein VFMJ11_1730 (209 aa).

The N-terminal stretch at 1–21 is a signal peptide; the sequence is MKIQSIFAASFCLLSSISAHA.

The protein belongs to the UPF0319 family.

The chain is UPF0319 protein VFMJ11_1730 from Aliivibrio fischeri (strain MJ11) (Vibrio fischeri).